A 523-amino-acid polypeptide reads, in one-letter code: 2-isopropylmalate synthase (523 aa).

The region spanning 5–267 is the Pyruvate carboxyltransferase domain; the sequence is VIIFDTTLRD…HTNINHHEIW (263 aa). Residues D14, H202, H204, and N238 each contribute to the Mn(2+) site. The interval 392–523 is regulatory domain; sequence RLDYFSVQSG…QNKENNKETV (132 aa).

Belongs to the alpha-IPM synthase/homocitrate synthase family. LeuA type 1 subfamily. Homodimer. The cofactor is Mn(2+).

It is found in the cytoplasm. The enzyme catalyses 3-methyl-2-oxobutanoate + acetyl-CoA + H2O = (2S)-2-isopropylmalate + CoA + H(+). Its pathway is amino-acid biosynthesis; L-leucine biosynthesis; L-leucine from 3-methyl-2-oxobutanoate: step 1/4. Functionally, catalyzes the condensation of the acetyl group of acetyl-CoA with 3-methyl-2-oxobutanoate (2-ketoisovalerate) to form 3-carboxy-3-hydroxy-4-methylpentanoate (2-isopropylmalate). This Salmonella typhi protein is 2-isopropylmalate synthase.